Here is a 164-residue protein sequence, read N- to C-terminus: Peptide deformylase (164 aa).

Residues cysteine 87 and histidine 129 each contribute to the Fe cation site. The active site involves glutamate 130. Histidine 133 provides a ligand contact to Fe cation.

This sequence belongs to the polypeptide deformylase family. Fe(2+) is required as a cofactor.

It catalyses the reaction N-terminal N-formyl-L-methionyl-[peptide] + H2O = N-terminal L-methionyl-[peptide] + formate. Functionally, removes the formyl group from the N-terminal Met of newly synthesized proteins. Requires at least a dipeptide for an efficient rate of reaction. N-terminal L-methionine is a prerequisite for activity but the enzyme has broad specificity at other positions. This is Peptide deformylase from Thermotoga neapolitana (strain ATCC 49049 / DSM 4359 / NBRC 107923 / NS-E).